The chain runs to 87 residues: uncharacterized protein (87 aa).

It to A.fulgidus AF_0255 and AF_1348.

This is an uncharacterized protein from Archaeoglobus fulgidus (strain ATCC 49558 / DSM 4304 / JCM 9628 / NBRC 100126 / VC-16).